The chain runs to 348 residues: N-formyl peptide receptor 2 (348 aa).

An N-linked (GlcNAc...) asparagine glycan is attached at Asn-1. The Extracellular segment spans residues Asn-1–Ile-24. Residues Leu-25–Val-47 traverse the membrane as a helical segment. The Cytoplasmic portion of the chain corresponds to Ala-48 to Thr-58. Residues Ile-59–Val-80 form a helical membrane-spanning segment. The Extracellular segment spans residues Ser-81–Leu-97. A disulfide bridge links Cys-95 with Cys-173. Residues Ile-98–Leu-118 traverse the membrane as a helical segment. Over Asp-119–Ser-137 the chain is Cytoplasmic. The chain crosses the membrane as a helical span at residues Leu-138 to Leu-159. At Phe-160 to Arg-202 the chain is on the extracellular side. A helical transmembrane segment spans residues Phe-203–Ala-223. The Cytoplasmic segment spans residues Lys-224–Val-239. Residues Leu-240 to Val-263 form a helical membrane-spanning segment. Residues Trp-264–Pro-283 are Extracellular-facing. The chain crosses the membrane as a helical span at residues Thr-284–Gly-303. Residues Gln-304 to Met-348 lie on the Cytoplasmic side of the membrane. A disordered region spans residues Leu-322 to Met-348. The segment covering Ser-326–Asn-335 has biased composition (polar residues).

This sequence belongs to the G-protein coupled receptor 1 family. In terms of assembly, interacts with Amyloid-beta protein 42, product of APP; the interaction takes place at the cell surface and the complex is then rapidly internalized.

It is found in the cell membrane. In terms of biological role, low affinity receptor for N-formyl-methionyl peptides, which are powerful neutrophil chemotactic factors. Binding of FMLP to the receptor causes activation of neutrophils. This response is mediated via a G-protein that activates a phosphatidylinositol-calcium second messenger system. Receptor for the chemokine-like protein FAM19A5, mediating FAM19A5-stimulated macrophage chemotaxis and the inhibitory effect on TNFSF11/RANKL-induced osteoclast differentiation. The protein is N-formyl peptide receptor 2 (FPR2) of Pan troglodytes (Chimpanzee).